Reading from the N-terminus, the 278-residue chain is MDSMPEPASRCLLLLPLLLLLLLLLPAPELGPSQAGAEENDWVRLPSKCEVCKYVAVELKSAFEETGKTKEVIGTGYGILDQKASGVKYTKSDLRLIEVTETICKRLLDYSLHKERTGSNRFAKGMSETFETLHNLVHKGVKVVMDIPYELWNETSAEVADLKKQCDVLVEEFEEVIEDWYRNHQEEDLTEFLCANHVLKGKDTSCLAEQWSGKKGDTAALGGKKSKKKSSRAKAAGGRSSSSKQRKELGGLEGDPSPEEDEGIQKASPLTHSPPDEL.

The N-terminal stretch at 1 to 30 is a signal peptide; that stretch reads MDSMPEPASRCLLLLPLLLLLLLLLPAPEL. In terms of domain architecture, Saposin B-type spans 47–271; sequence SKCEVCKYVA…EGIQKASPLT (225 aa). Cystine bridges form between Cys-49/Cys-206, Cys-52/Cys-194, and Cys-104/Cys-166. Residue Asn-153 is glycosylated (N-linked (GlcNAc...) asparagine). Positions 153–179 form a coiled coil; sequence NETSAEVADLKKQCDVLVEEFEEVIED. The segment at 215 to 278 is disordered; sequence KGDTAALGGK…PLTHSPPDEL (64 aa). Residues 233–243 are compositionally biased toward low complexity; that stretch reads AKAAGGRSSSS.

The protein belongs to the canopy family. Interacts with HSP90B1; this interaction is disrupted in the presence of ATP. Interacts with TLR1, TLR2, TLR4 and TLR9. Strongest interaction with TLR4.

The protein resides in the endoplasmic reticulum. In terms of biological role, toll-like receptor (TLR)-specific co-chaperone for HSP90B1. Required for proper TLR folding, except that of TLR3, and hence controls TLR exit from the endoplasmic reticulum. Consequently, required for both innate and adaptive immune responses. This chain is Protein canopy homolog 3 (CNPY3), found in Homo sapiens (Human).